Consider the following 326-residue polypeptide: Deoxyuridine 5'-triphosphate nucleotidohydrolase (326 aa).

Residues 218 to 220 (RSS) and 321 to 322 (FG) each bind substrate.

It belongs to the dUTPase family. The cofactor is Mg(2+).

It carries out the reaction dUTP + H2O = dUMP + diphosphate + H(+). In terms of biological role, involved in nucleotide metabolism: produces dUMP, the immediate precursor of thymidine nucleotides and decreases the intracellular concentration of dUTP to avoid uracil incorporation into viral DNA. The chain is Deoxyuridine 5'-triphosphate nucleotidohydrolase from Equus caballus (Horse).